The sequence spans 231 residues: Sugar fermentation stimulation protein homolog (231 aa).

This sequence belongs to the SfsA family.

The polypeptide is Sugar fermentation stimulation protein homolog (Geotalea uraniireducens (strain Rf4) (Geobacter uraniireducens)).